The following is a 508-amino-acid chain: Photosystem II CP47 reaction center protein (508 aa).

The next 6 helical transmembrane spans lie at S21–S36, I101–W115, G140–F156, I203–S218, V237–V252, and S457–R472.

This sequence belongs to the PsbB/PsbC family. PsbB subfamily. PSII is composed of 1 copy each of membrane proteins PsbA, PsbB, PsbC, PsbD, PsbE, PsbF, PsbH, PsbI, PsbJ, PsbK, PsbL, PsbM, PsbT, PsbX, PsbY, PsbZ, Psb30/Ycf12, at least 3 peripheral proteins of the oxygen-evolving complex and a large number of cofactors. It forms dimeric complexes. Requires Binds multiple chlorophylls. PSII binds additional chlorophylls, carotenoids and specific lipids. as cofactor.

The protein resides in the plastid. Its subcellular location is the chloroplast thylakoid membrane. One of the components of the core complex of photosystem II (PSII). It binds chlorophyll and helps catalyze the primary light-induced photochemical processes of PSII. PSII is a light-driven water:plastoquinone oxidoreductase, using light energy to abstract electrons from H(2)O, generating O(2) and a proton gradient subsequently used for ATP formation. The sequence is that of Photosystem II CP47 reaction center protein from Aethionema grandiflorum (Persian stone-cress).